Reading from the N-terminus, the 129-residue chain is Type II secretion system protein I (129 aa).

A propeptide spans Met1–Gly6 (leader sequence). The residue at position 7 (Phe7) is an N-methylphenylalanine. The helical transmembrane segment at Phe7 to Leu27 threads the bilayer.

Belongs to the GSP I family. As to quaternary structure, type II secretion is composed of four main components: the outer membrane complex, the inner membrane complex, the cytoplasmic secretion ATPase and the periplasm-spanning pseudopilus. Forms the tip of the type II pseudopilus by interacting with XcpU, XcpW and XcpX. Interacts with core component XcpT. In terms of processing, cleaved by prepilin peptidase. Methylated by prepilin peptidase at the amino group of the N-terminal phenylalanine once the leader sequence is cleaved by prepilin peptidase.

It localises to the cell inner membrane. Functionally, component of the type II secretion system required for the energy-dependent secretion of extracellular factors such as proteases and toxins from the periplasm. Part of the pseudopilus tip complex that is critical for the recognition and binding of secretion substrates. Type II pseudopilus confers increased bacterial adhesive capabilities. The protein is Type II secretion system protein I (xcpV) of Pseudomonas aeruginosa (strain ATCC 15692 / DSM 22644 / CIP 104116 / JCM 14847 / LMG 12228 / 1C / PRS 101 / PAO1).